The primary structure comprises 615 residues: Nuclear receptor subfamily 1 group D member 1 (615 aa).

Residues 1-12 show a composition bias toward polar residues; that stretch reads MTTLDSNNNTGG. The interval 1-70 is required for phosphorylation by CSNK1E and cytoplasmic localization; it reads MTTLDSNNNT…TQDPARSFGS (70 aa). A disordered region spans residues 1 to 120; the sequence is MTTLDSNNNT…SSRVSPSKGT (120 aa). A modulating region spans residues 1–129; it reads MTTLDSNNNT…TSNITKLNGM (129 aa). Residues 14–34 are compositionally biased toward low complexity; it reads ITYIGSSGSSPSRTSPESLYS. The segment covering 35-48 has biased composition (polar residues); the sequence is DSSNGSFQSLTQGC. The interval 49-285 is crucial for activation of GJA1; the sequence is PTYFPPSPTG…PPRSPSPEPT (237 aa). Ser-55 and Ser-59 each carry phosphoserine; by GSK3-beta. Over residues 70-94 the composition is skewed to low complexity; the sequence is SAPPSLSDDSSPSSASSSSSSSSSS. The segment at residues 130-206 is a DNA-binding region (nuclear receptor); sequence VLLCKVCGDV…VGMSRDAVRF (77 aa). 2 consecutive NR C4-type zinc fingers follow at residues 133-153 and 170-194; these read CKVC…CEGC and CLKN…FKKC. 2 positions are modified to N6-acetyllysine; by KAT5: Lys-192 and Lys-193. Disordered stretches follow at residues 235–286 and 312–337; these read LCPL…EPTM and PGNF…SQGC. A compositionally biased stretch (low complexity) spans 240-252; it reads TSPTPHPTSGSMG. Over residues 253–262 the composition is skewed to pro residues; that stretch reads PSPPPAPAPT. The residue at position 275 (Thr-275) is a Phosphothreonine; by CDK1. One can recognise an NR LBD domain in the interval 285 to 615; sequence TMEDVISQVA…KLLSFRVDAQ (331 aa). Over residues 312–328 the composition is skewed to polar residues; that stretch reads PGNFNANHASGSPSATT. Cys-419 serves as a coordination point for heme. At Lys-592 the chain carries N6-acetyllysine. Heme is bound at residue His-603.

Belongs to the nuclear hormone receptor family. NR1 subfamily. Binds DNA as a monomer or a homodimer. Interacts with NR2E3 and ZNHIT1. Interacts with C1D. Interacts with SP1. Interacts with OPHN1 (via C-terminus). Interacts with PER2; the interaction associates PER2 to BMAL1 promoter region. Interacts with CRY1. Interacts with CCAR2. Interacts with SIAH2. Interacts with FBXW7 and CDK1. Interacts with HUWE1. Interacts with NR0B2. Interacts with NFIL3. Interacts (via domain NR LBD) with HSP90AA1 and HSP90AB1. Post-translationally, ubiquitinated, leading to its proteasomal degradation. Ubiquitinated by the SCF(FBXW7) complex when phosphorylated by CDK1 leading to its proteasomal degradation. Ubiquitinated by SIAH2; leading to its proteasomal degradation. Rapidly ubiquitinated in response to inflammatory triggers and sumoylation is a prerequisite to its ubiquitination. In terms of processing, sumoylated by UBE2I, desumoylated by SENP1, and sumoylation is a prerequisite to its ubiquitination. Phosphorylated by CSNK1E; phosphorylation enhances its cytoplasmic localization. Post-translationally, undergoes lysosome-mediated degradation in a time-dependent manner in the liver. Expressed during adipocyte differentiation (at protein level). Expressed in skeletal muscle, bladder, lumbar spinal cord, pancreatic islets and hypothalamus. Expressed in developing and adult retina. In the adult retina, predominantly expressed in the outer nuclear layer, where rod and cone cells reside, and also localized to the ganglion cell layer. Expressed in a circadian manner in the liver. Expressed in a circadian manner in the lung with a peak between ZT8 and ZT12.

It localises to the nucleus. The protein resides in the cytoplasm. It is found in the cell projection. The protein localises to the dendrite. Its subcellular location is the dendritic spine. Its function is as follows. Transcriptional repressor which coordinates circadian rhythm and metabolic pathways in a heme-dependent manner. Integral component of the complex transcription machinery that governs circadian rhythmicity and forms a critical negative limb of the circadian clock by directly repressing the expression of core clock components BMAL1, CLOCK and CRY1. Also regulates genes involved in metabolic functions, including lipid and bile acid metabolism, adipogenesis, gluconeogenesis and the macrophage inflammatory response. Acts as a receptor for heme which stimulates its interaction with the NCOR1/HDAC3 corepressor complex, enhancing transcriptional repression. Recognizes two classes of DNA response elements within the promoter of its target genes and can bind to DNA as either monomers or homodimers, depending on the nature of the response element. Binds as a monomer to a response element composed of the consensus half-site motif 5'-[A/G]GGTCA-3' preceded by an A/T-rich 5' sequence (RevRE), or as a homodimer to a direct repeat of the core motif spaced by two nucleotides (RevDR-2). Acts as a potent competitive repressor of ROR alpha (RORA) function and regulates the levels of its ligand heme by repressing the expression of PPARGC1A, a potent inducer of heme synthesis. Regulates lipid metabolism by repressing the expression of APOC3 and by influencing the activity of sterol response element binding proteins (SREBPs); represses INSIG2 which interferes with the proteolytic activation of SREBPs which in turn govern the rhythmic expression of enzymes with key functions in sterol and fatty acid synthesis. Regulates gluconeogenesis via repression of G6PC1 and PEPCK and adipocyte differentiation via repression of PPARG. Regulates glucagon release in pancreatic alpha-cells via the AMPK-NAMPT-SIRT1 pathway and the proliferation, glucose-induced insulin secretion and expression of key lipogenic genes in pancreatic-beta cells. Positively regulates bile acid synthesis by increasing hepatic expression of CYP7A1 via repression of NR0B2 and NFIL3 which are negative regulators of CYP7A1. Modulates skeletal muscle oxidative capacity by regulating mitochondrial biogenesis and autophagy; controls mitochondrial biogenesis and respiration by interfering with the STK11-PRKAA1/2-SIRT1-PPARGC1A signaling pathway. Represses the expression of SERPINE1/PAI1, an important modulator of cardiovascular disease and the expression of inflammatory cytokines and chemokines in macrophages. Represses gene expression at a distance in macrophages by inhibiting the transcription of enhancer-derived RNAs (eRNAs). Plays a role in the circadian regulation of body temperature and negatively regulates thermogenic transcriptional programs in brown adipose tissue (BAT); imposes a circadian oscillation in BAT activity, increasing body temperature when awake and depressing thermogenesis during sleep. In concert with NR2E3, regulates transcriptional networks critical for photoreceptor development and function. In addition to its activity as a repressor, can also act as a transcriptional activator. In the ovarian granulosa cells acts as a transcriptional activator of STAR which plays a role in steroid biosynthesis. In collaboration with SP1, activates GJA1 transcription in a heme-independent manner. Represses the transcription of CYP2B10, CYP4A10 and CYP4A14. Represses the transcription of CES2. Represses and regulates the circadian expression of TSHB in a NCOR1-dependent manner. Negatively regulates the protein stability of NR3C1 and influences the time-dependent subcellular distribution of NR3C1, thereby affecting its transcriptional regulatory activity. Plays a critical role in the circadian control of neutrophilic inflammation in the lung; under resting, non-stress conditions, acts as a rhythmic repressor to limit inflammatory activity whereas in the presence of inflammatory triggers undergoes ubiquitin-mediated degradation thereby relieving inhibition of the inflammatory response. Plays a key role in the circadian regulation of microglial activation and neuroinflammation; suppresses microglial activation through the NF-kappaB pathway in the central nervous system. Plays a role in the regulation of the diurnal rhythms of lipid and protein metabolism in the skeletal muscle via transcriptional repression of genes controlling lipid and amino acid metabolism in the muscle. This chain is Nuclear receptor subfamily 1 group D member 1 (Nr1d1), found in Mus musculus (Mouse).